A 95-amino-acid polypeptide reads, in one-letter code: Large ribosomal subunit protein bL25 (95 aa).

This sequence belongs to the bacterial ribosomal protein bL25 family. Part of the 50S ribosomal subunit; part of the 5S rRNA/L5/L18/L25 subcomplex. Contacts the 5S rRNA. Binds to the 5S rRNA independently of L5 and L18.

Functionally, this is one of the proteins that binds to the 5S RNA in the ribosome where it forms part of the central protuberance. This Yersinia enterocolitica serotype O:8 / biotype 1B (strain NCTC 13174 / 8081) protein is Large ribosomal subunit protein bL25.